The following is a 343-amino-acid chain: Dihydroorotase (343 aa).

2 residues coordinate Zn(2+): His-14 and His-16. Substrate contacts are provided by residues 16 to 18 (HLR) and Asn-42. Residues Lys-100, His-137, and His-175 each contribute to the Zn(2+) site. Residue Lys-100 is modified to N6-carboxylysine. Substrate is bound at residue His-137. Residue Leu-220 coordinates substrate. Asp-248 provides a ligand contact to Zn(2+). The active site involves Asp-248. Positions 252 and 264 each coordinate substrate.

It belongs to the metallo-dependent hydrolases superfamily. DHOase family. Class II DHOase subfamily. Homodimer. The cofactor is Zn(2+).

It catalyses the reaction (S)-dihydroorotate + H2O = N-carbamoyl-L-aspartate + H(+). It functions in the pathway pyrimidine metabolism; UMP biosynthesis via de novo pathway; (S)-dihydroorotate from bicarbonate: step 3/3. Functionally, catalyzes the reversible cyclization of carbamoyl aspartate to dihydroorotate. In Parasynechococcus marenigrum (strain WH8102), this protein is Dihydroorotase.